The sequence spans 331 residues: RNA 3'-terminal phosphate cyclase (331 aa).

ATP contacts are provided by residues glutamine 100 and 276–280; that span reads HLADQ. The active-site Tele-AMP-histidine intermediate is histidine 301.

It belongs to the RNA 3'-terminal cyclase family. Type 1 subfamily.

It localises to the cytoplasm. It catalyses the reaction a 3'-end 3'-phospho-ribonucleotide-RNA + ATP = a 3'-end 2',3'-cyclophospho-ribonucleotide-RNA + AMP + diphosphate. Catalyzes the conversion of 3'-phosphate to a 2',3'-cyclic phosphodiester at the end of RNA. The mechanism of action of the enzyme occurs in 3 steps: (A) adenylation of the enzyme by ATP; (B) transfer of adenylate to an RNA-N3'P to produce RNA-N3'PP5'A; (C) and attack of the adjacent 2'-hydroxyl on the 3'-phosphorus in the diester linkage to produce the cyclic end product. The biological role of this enzyme is unknown but it is likely to function in some aspects of cellular RNA processing. This is RNA 3'-terminal phosphate cyclase from Methanococcoides burtonii (strain DSM 6242 / NBRC 107633 / OCM 468 / ACE-M).